Reading from the N-terminus, the 392-residue chain is Multidrug resistance protein MdtL (392 aa).

Helical transmembrane passes span 4 to 24, 38 to 58, 69 to 89, 95 to 115, 131 to 151, 158 to 178, 209 to 229, 246 to 266, 270 to 290, 294 to 314, 331 to 351, and 357 to 377; these read FLLCSFALVLLYPSGIDMYLV, AQLHIAFSVYLAGMASAMLFA, PVAIVGAAIFVIASLICAQVH, LIGRFIQGIAAGSCYVVAFAI, LLNGITCIIPVLAPVLGHLIM, SLFYTMTGMGVMVAVLSVFIL, LLITTLSVTVILTYVNVSPVL, ALMAMISMAVSFSTPFVLSLF, TLMLTSQVLFLAAGVTLSLAT, VTLIGLGMICAGFSVGFGVAM, VLGIAQVCGSSLWIWLAAIIG, and MLIGILIACSIVSLVLLLVVT.

Belongs to the major facilitator superfamily. DHA1 family. MdtL (TC 2.A.1.2.22) subfamily.

The protein resides in the cell inner membrane. The chain is Multidrug resistance protein MdtL from Klebsiella pneumoniae subsp. pneumoniae (strain ATCC 700721 / MGH 78578).